The chain runs to 437 residues: Eukaryotic peptide chain release factor subunit 1 (437 aa).

At Ala-2 the chain carries N-acetylalanine. Positions 61–64 (NIKS) match the NIKS motif; plays an important role in translational termination motif. Lys-63 is modified (4-hydroxylysine). Residue Lys-87 forms a Glycyl lysine isopeptide (Lys-Gly) (interchain with G-Cter in SUMO2) linkage. Gln-185 carries the N5-methylglutamine modification. Residue Lys-279 forms a Glycyl lysine isopeptide (Lys-Gly) (interchain with G-Cter in ubiquitin) linkage. The residue at position 347 (Thr-347) is a Phosphothreonine. Lys-404 is covalently cross-linked (Glycyl lysine isopeptide (Lys-Gly) (interchain with G-Cter in SUMO2)).

It belongs to the eukaryotic release factor 1 family. In terms of assembly, component of the eRF1-eRF3-GTP ternary complex, composed of ETF1/ERF1 and eRF3 (GSPT1/ERF3A or GSPT2/ERF3B) and GTP. Component of the transient SURF (SMG1-UPF1-eRF1-eRF3) complex. Interacts with JMJD4. The ETF1-GSPT1 complex interacts with JMJD4. Hydroxylation at Lys-63 by JMJD4 promotes its translational termination efficiency. In terms of processing, methylated at Gln-185 by N6AMT1. Post-translationally, ubiquitinated at Lys-279 via 'Lys-6'-linked polyubiquitin chains by RNF14 and RNF25 in response to ribosome collisions (ribosome stalling), leading to its degradation by the proteasome and rescue of stalled ribosomes.

The protein resides in the cytoplasm. Component of the eRF1-eRF3-GTP ternary complex, a ternary complex that mediates translation termination in response to the termination codons. The eRF1-eRF3-GTP complex binds to a stop codon in the ribosomal A-site. ETF1/ERF1 is responsible for stop codon recognition and inducing hydrolysis of peptidyl-tRNA. Following GTP hydrolysis, eRF3 (GSPT1/ERF3A or GSPT2/ERF3B) dissociates, permitting ETF1/eRF1 to accommodate fully in the A-site, followed by hydrolysis of peptidyl-tRNA. Component of the transient SURF complex which recruits UPF1 to stalled ribosomes in the context of nonsense-mediated decay (NMD) of mRNAs containing premature stop codons. Required for SHFL-mediated translation termination which inhibits programmed ribosomal frameshifting (-1PRF) of mRNA from viruses and cellular genes. The sequence is that of Eukaryotic peptide chain release factor subunit 1 (ETF1) from Bos taurus (Bovine).